The chain runs to 489 residues: Phosphoenolpyruvate carboxykinase (ATP) (489 aa).

Substrate-binding residues include arginine 53 and tyrosine 159. Residues histidine 185, 208 to 216 (GLSGTGKTT), aspartate 258, arginine 300, 409 to 410 (KI), and serine 415 each bind ATP. Residue arginine 300 coordinates substrate.

This sequence belongs to the phosphoenolpyruvate carboxykinase (ATP) family.

Its subcellular location is the cytoplasm. The enzyme catalyses oxaloacetate + ATP = phosphoenolpyruvate + ADP + CO2. The protein operates within carbohydrate biosynthesis; gluconeogenesis. Functionally, involved in the gluconeogenesis. Catalyzes the conversion of oxaloacetate (OAA) to phosphoenolpyruvate (PEP) through direct phosphoryl transfer between the nucleoside triphosphate and OAA. In Aeropyrum pernix (strain ATCC 700893 / DSM 11879 / JCM 9820 / NBRC 100138 / K1), this protein is Phosphoenolpyruvate carboxykinase (ATP).